A 791-amino-acid chain; its full sequence is Valine--tRNA ligase (791 aa).

A 'HIGH' region motif is present at residues 40-50 (PTVSGKMHMGH). The 'KMSKS' region motif lies at 521–525 (KMSKS). Position 524 (Lys-524) interacts with ATP.

It belongs to the class-I aminoacyl-tRNA synthetase family. ValS type 2 subfamily.

The protein resides in the cytoplasm. It catalyses the reaction tRNA(Val) + L-valine + ATP = L-valyl-tRNA(Val) + AMP + diphosphate. Functionally, catalyzes the attachment of valine to tRNA(Val). As ValRS can inadvertently accommodate and process structurally similar amino acids such as threonine, to avoid such errors, it has a 'posttransfer' editing activity that hydrolyzes mischarged Thr-tRNA(Val) in a tRNA-dependent manner. This is Valine--tRNA ligase from Thermoplasma acidophilum (strain ATCC 25905 / DSM 1728 / JCM 9062 / NBRC 15155 / AMRC-C165).